A 217-amino-acid chain; its full sequence is MALSDAAIKVQAALNERGLETPMLPKTSTPEERKIKIEHHMREILTLMSLDLTDDSLMDTPRRIAKMYVDEIFSGLDYDNFPKITVIDNKMGFDEMVRVQDISLTSTCEHHLVTIDGLATVAYLPRAKIIGLSKINRIVRFFAQRPQVQERLTQQILVALQTLLETKDVAVKIDAVHFCVKSRGVMDSTSSTTTTSLGGIFKSNPATRAEFLQQAKF.

Positions 108, 111, and 179 each coordinate Zn(2+).

Belongs to the GTP cyclohydrolase I family. As to quaternary structure, toroid-shaped homodecamer, composed of two pentamers of five dimers.

The enzyme catalyses GTP + H2O = 7,8-dihydroneopterin 3'-triphosphate + formate + H(+). Its pathway is cofactor biosynthesis; 7,8-dihydroneopterin triphosphate biosynthesis; 7,8-dihydroneopterin triphosphate from GTP: step 1/1. The protein is GTP cyclohydrolase 1 of Shewanella denitrificans (strain OS217 / ATCC BAA-1090 / DSM 15013).